A 495-amino-acid polypeptide reads, in one-letter code: MRTLSLLILFLSTFLFAQVPKELLEFFQRSGYVVEKEGEKVLIDLPRGKAFPGEIFEVFQSKKPIIHPVTKKVLGYKEEKVGEVEVIKPRENFSEAKTLENNGIKPGDRVKLKIGSVCYIGGDEGYYALSQVVQNVKRNSENCDYVVKELENGYGVSYKGKPLAFFQYSGVGFAKRGGVFEDFALKAKFVRSLESLPLSADICKLFGKKDYLVVLFSDKVKVYEVLKTDFVEVLSYAIPTGYPVGVVCYENKGRSAVLVNMISNGEASSAVLSPVGNSLMLTDKNVPYLFGFFYQNGKKVLIGQEFKGSWGKVYRFELRGDKLVRKDALNLPEDFRVDGANAWNNVLVFVDNDGQLRVYVNDEEVLTEDGFGLSYTTAEVPGVYEYAEGDKYGFYVRPNFTKVYKDVLPLIAKNRASNIFQLVGFTKFTEGELWTVVRKKEKVYEAIKLKGRKFEEAIQAIVRDSEGRIFVITGSKGTIPIQNRGEVYLIEITPL.

The signal sequence occupies residues 1-17; that stretch reads MRTLSLLILFLSTFLFA.

This is an uncharacterized protein from Aquifex aeolicus (strain VF5).